Reading from the N-terminus, the 421-residue chain is MGDRFIPIRNVSNEFNFSFQSFKECVLSHGSNLRRKTSGTIQRQFMELLSMELFGSQASRSRAFYYGEDKRKIEKKMLDTPDRKSYSLSPISPQSQDMLRQPQKPKRAFPKTPYKILDAPYLKNDFYLNLLDWGQSNVLAVGLASSIYLWSAASGKVVQLHDFGATNHVTSVLWTGKGTQLAVGTDSGVIYIWDIESTKSVRSLKGHSERVAALAWNDNTLTSGGKDEVILHHDLRAPGCCAEMMKVHEQEICGLQWDRSLGQLASGGNDNNLFVWDYRSSRPLHKFEEHTAAVKAIGWSPHQRGILASGGGTIDRCLTIHNTLTGRLQNKLDTGSQVCNMAWSKTSNEIVTTHGFAKNQVSLWKYPSLKNIANLTAHTNRVLYLSMSPDGQSIVTGAGDETLRFWKLFNKKPKEESTLIR.

Residues 79–107 (DTPDRKSYSLSPISPQSQDMLRQPQKPKR) form a disordered region. The segment covering 86–98 (YSLSPISPQSQDM) has biased composition (polar residues). WD repeat units follow at residues 123-160 (KNDF…VVQL), 164-203 (GATN…SVRS), 206-246 (GHSE…EMMK), 247-286 (VHEQ…PLHK), 289-331 (EHTA…LQNK), 333-374 (DTGS…NIAN), and 377-416 (AHTN…PKEE).

The protein belongs to the WD repeat CDC20/Fizzy family. Interacts with mes1.

Its subcellular location is the nucleus. Meiosis-specific activator of the anaphase promoting complex/cyclosome (APC/C). Involved in cdc13 degradation. This is Meiotic fizzy-related protein 1 (mfr1) from Schizosaccharomyces pombe (strain 972 / ATCC 24843) (Fission yeast).